A 184-amino-acid polypeptide reads, in one-letter code: Flagellar transcriptional regulator FlhC (184 aa).

Residues Cys144, Cys147, Cys163, and Cys166 each contribute to the Zn(2+) site.

This sequence belongs to the FlhC family. In terms of assembly, heterohexamer composed of two FlhC and four FlhD subunits. Each FlhC binds a FlhD dimer, forming a heterotrimer, and a hexamer assembles by dimerization of two heterotrimers. Requires Zn(2+) as cofactor.

The protein resides in the cytoplasm. Functionally, functions in complex with FlhD as a master transcriptional regulator that regulates transcription of several flagellar and non-flagellar operons by binding to their promoter region. Activates expression of class 2 flagellar genes, including fliA, which is a flagellum-specific sigma factor that turns on the class 3 genes. Also regulates genes whose products function in a variety of physiological pathways. This chain is Flagellar transcriptional regulator FlhC, found in Verminephrobacter eiseniae (strain EF01-2).